We begin with the raw amino-acid sequence, 743 residues long: MSDSTAPSAHRPRGSEDFGVFDDAKTYYASDERHTGRFANRTRTYSQSSLIKQIERLNLPEPFRRGSHDESNLEQGRRFLIQVDATLESLKAQEDTDGNMQITIEDSGPKVLPLRTAASAGYHRFEVRGTYMLSNLLQELTLAKEYGRKQIILDEARLNENPVNRLSRLIKDHFWDGLTRRIDASSIEIAARDPKDWTDDPRPRIYIPSKCTAQFEYYKQVALDRPEIRLDVQLLPEVITPEIIRDMNEKPGLLAVAVEEVEEQDPVKGTIKTLRGLPFVVPGGRFNELYGWDSYMESLGLLVNDRVDLAKAMVLNFCFCIEHYGKILNATRSYYLGRSQPPFLTDMALRVYEKIKHEPDALEFLRRSILAAIKEYHSVWTGQARLDPTTGLSRYCPEGLGVPPETEPSHFVHILQPYIKKHGMEFDEFVRAYNHGEIKEPELDNYFMHDRAVRESGHDTSYRFEGVCANLATIDLNSLLFKYETDISRTIRSLFDDKLVMPEEFCQGTPYKPGDILTSALWDRKAKRRKLTMDKLMWNEEEGMFFDYDFVNKKRCTYETATTLWSLWAGLASPKQAADIVKKGLPKFEEFGGLLAGTESSRGEIGLERPNRQWDYPYGWAPQQMLAWTGLLRYSFNEEAERLAYKWLFMITKAFVDFNGVVVEKYDVTRPIDPHRVDAEYGNQGLNFKGVAKEGFGWVNASYVYGLQIVNAHMRRALGTLTPYPTFIKAIEQLNEKALADLE.

5 residues coordinate Ca(2+): Asp-95, Asp-97, Asn-99, Gln-101, and Asp-106. Substrate-binding positions include Arg-285, 292–293, Asn-329, 338–340, Glu-405, Arg-454, and Gly-457; these read WD and RSQ. Active-site proton donor/acceptor residues include Asp-459 and Glu-664.

This sequence belongs to the glycosyl hydrolase 37 family. Ca(2+) is required as a cofactor.

It is found in the cytoplasm. It carries out the reaction alpha,alpha-trehalose + H2O = alpha-D-glucose + beta-D-glucose. The protein operates within carbohydrate degradation. Functionally, hydrolyzes intracellular trehalose to glucose. The polypeptide is Cytosolic neutral trehalase (Beauveria bassiana (strain ARSEF 2860) (White muscardine disease fungus)).